The primary structure comprises 320 residues: Membrane protein insertase YidC 2 (320 aa).

Positions 1–23 (MKNLKKKLTLTGLMTAGLLFLSG) are cleaved as a signal peptide. Cys-24 carries the N-palmitoyl cysteine lipid modification. The S-diacylglycerol cysteine moiety is linked to residue Cys-24. The next 5 helical transmembrane spans lie at 68 to 88 (YGWGIIFVTLIIRFLILPLGL), 142 to 162 (MLSSIGCLPMLIQWPFFIALY), 178 to 198 (GIPLGHPSVVLVIISGVLYFI), 217 to 237 (AMLIMSPAMIVVFSFMSPAGV), and 239 to 259 (LYWAVGGFVIVIQQIIITFIM). A disordered region spans residues 270–320 (EFTKNPPKINNEGLKDVTPTSVQENFKEITSERNEKERKSGGRNAGKQNRK). The segment covering 294 to 309 (NFKEITSERNEKERKS) has biased composition (basic and acidic residues).

This sequence belongs to the OXA1/ALB3/YidC family. Type 2 subfamily.

It localises to the cell membrane. Its function is as follows. Required for the insertion and/or proper folding and/or complex formation of integral membrane proteins into the membrane. Involved in integration of membrane proteins that insert both dependently and independently of the Sec translocase complex, as well as at least some lipoproteins. The polypeptide is Membrane protein insertase YidC 2 (Lactococcus lactis subsp. lactis (strain IL1403) (Streptococcus lactis)).